The primary structure comprises 107 residues: Acetyl-CoA acetyltransferase (107 aa).

The active-site Acyl-thioester intermediate is the C88.

The protein belongs to the thiolase-like superfamily. Thiolase family. As to quaternary structure, homotetramer.

It localises to the cytoplasm. The catalysed reaction is 2 acetyl-CoA = acetoacetyl-CoA + CoA. Its function is as follows. Catalyzes the condensation of two molecules of acetyl-CoA to produce acetoacetyl-CoA. The chain is Acetyl-CoA acetyltransferase (thi) from Clostridioides difficile (Peptoclostridium difficile).